Here is a 209-residue protein sequence, read N- to C-terminus: Lectin (209 aa).

In terms of assembly, homodimer; non-covalently linked.

Functionally, binds chito-oligosaccherides. Has hemagglutinating activity towards rabbit erythrocytes. This Luffa acutangula (Ridged gourd) protein is Lectin.